The following is a 157-amino-acid chain: Small ribosomal subunit protein uS7 (157 aa).

It belongs to the universal ribosomal protein uS7 family. Part of the 30S ribosomal subunit. Contacts proteins S9 and S11.

Functionally, one of the primary rRNA binding proteins, it binds directly to 16S rRNA where it nucleates assembly of the head domain of the 30S subunit. Is located at the subunit interface close to the decoding center, probably blocks exit of the E-site tRNA. The protein is Small ribosomal subunit protein uS7 of Blochmanniella floridana.